A 430-amino-acid chain; its full sequence is N-lysine methyltransferase SMYD2-B (430 aa).

In terms of domain architecture, SET spans 5-239 (EGLERFDSPG…AGEEVFTSYI (235 aa)). 15–17 (KGR) serves as a coordination point for S-adenosyl-L-methionine. The Zn(2+) site is built by C50, C53, C63, C66, C72, C76, H84, and C88. The MYND-type zinc finger occupies 50–88 (CDFCFTRKEGLSKCGKCKQAFYCNVDCQKGDWPMHKLEC). S-adenosyl-L-methionine is bound by residues H135, 204–205 (NH), and 256–258 (YFF).

The protein belongs to the class V-like SAM-binding methyltransferase superfamily.

The protein localises to the cytoplasm. It localises to the cytosol. It is found in the nucleus. It carries out the reaction L-lysyl(4)-[histone H3] + 3 S-adenosyl-L-methionine = N(6),N(6),N(6)-trimethyl-L-lysyl(4)-[histone H3] + 3 S-adenosyl-L-homocysteine + 3 H(+). The enzyme catalyses L-lysyl-[protein] + S-adenosyl-L-methionine = N(6)-methyl-L-lysyl-[protein] + S-adenosyl-L-homocysteine + H(+). In terms of biological role, protein-lysine N-methyltransferase that methylates both histones and non-histone proteins, including p53/TP53 and RB1. Specifically trimethylates histone H3 'Lys-4' (H3K4me3) in vivo. The activity requires interaction with HSP90alpha. Shows even higher methyltransferase activity on p53/TP53. Monomethylates 'Lys-370' of p53/TP53, leading to decreased DNA-binding activity and subsequent transcriptional regulation activity of p53/TP53. Monomethylates RB1 at 'Lys-860'. The sequence is that of N-lysine methyltransferase SMYD2-B (smyd2-b) from Xenopus laevis (African clawed frog).